The following is a 201-amino-acid chain: MANGQFTIRSAGPASVGLTGERRGAASASSSALSNVQGDVRDRPIPTSSSRLPNAAILRDSSEIASTGLRYVAATLHWSEIAPLSLINKNDLAPAAYDFETRNDAGNVTAKVGRAVPVPKQGRLGKMLASVPLSTRISRVNSDRRLPTDAENHPETRDPRKGRGSHGVTPALHEKIGTAFVRRLRKIRTVLFAVAARLGAR.

Disordered regions lie at residues 28–51 and 139–171; these read ASSSALSNVQGDVRDRPIPTSSSR and RVNSDRRLPTDAENHPETRDPRKGRGSHGVTPA. Basic and acidic residues predominate over residues 141 to 161; that stretch reads NSDRRLPTDAENHPETRDPRK.

This is Protein VirD3 (virD3) from Rhizobium radiobacter (Agrobacterium tumefaciens).